Here is a 512-residue protein sequence, read N- to C-terminus: Sporulation-regulated protein 3 (512 aa).

Residues 31 to 68 are disordered; the sequence is RQSSQGQYAVDSHPPKSPELKHRRQRSSSFVNGKCRNR. Residues 106–365 enclose the Septin-type G domain; sequence NGIDFTLMVA…EKCRSEMLRT (260 aa). Residues 116–123 form a G1 motif region; sequence GQSGLGKT. GTP-binding positions include 116–123, G168, 247–255, and R315; these read GQSGLGKT and KSDLLTKEE. The interval 165-168 is G3 motif; it reads DTPG. Residues 246 to 249 form a G4 motif region; that stretch reads AKSD. 2 coiled-coil regions span residues 376–406 and 451–496; these read TKSV…LKNY and RDWK…KSSN.

The protein belongs to the TRAFAC class TrmE-Era-EngA-EngB-Septin-like GTPase superfamily. Septin GTPase family. As to quaternary structure, interacts with other septin proteins such as SPR28 to form a ring at the bud neck.

It is found in the prospore membrane. The protein resides in the bud neck. Septins are GTPases involved in cytokinesis that assemble into filaments and form a ring at the cleavage site. May act by recruiting MYO1 and HOF1, a protein involved in septation, to the site of cleavage. Septins are also involved in cell morphogenesis, bud site selection, chitin deposition, cell cycle regulation, cell compartmentalization and spore wall formation. This Saccharomyces cerevisiae (strain ATCC 204508 / S288c) (Baker's yeast) protein is Sporulation-regulated protein 3 (SPR3).